We begin with the raw amino-acid sequence, 417 residues long: FK506-binding protein 3 (417 aa).

2 disordered regions span residues 42-129 (SLDD…LSPE) and 191-307 (EGCG…DKPK). Composition is skewed to acidic residues over residues 61–84 (FDDEDDLLADSEEEEEEESEEESE), 99–120 (SEEEDSEEEDSEGEDSDDEFEE), and 197–222 (CACDDDSDYDLTPDEEDILDMEDASD). 2 stretches are compositionally biased toward basic and acidic residues: residues 236–249 (ANEKRKADEDEPKA) and 256–307 (DQKD…DKPK). Positions 331 to 417 (GARVGMRYIG…TFDVKLVSLK (87 aa)) constitute a PPIase FKBP-type domain.

Belongs to the FKBP-type PPIase family. FKBP3/4 subfamily.

The protein resides in the nucleus. It is found in the nucleolus. It catalyses the reaction [protein]-peptidylproline (omega=180) = [protein]-peptidylproline (omega=0). Inhibited by both FK506 and rapamycin. Functionally, PPIases accelerate the folding of proteins. It catalyzes the cis-trans isomerization of proline imidic peptide bonds in oligopeptides. The sequence is that of FK506-binding protein 3 (FPR3) from Eremothecium gossypii (strain ATCC 10895 / CBS 109.51 / FGSC 9923 / NRRL Y-1056) (Yeast).